We begin with the raw amino-acid sequence, 33 residues long: Beta-amanitin proprotein (33 aa).

A propeptide spanning residues 1 to 10 (MSDINATRLP) is cleaved from the precursor. The cyclopeptide (Ile-Pro) cross-link spans 11–18 (IWGIGCDP). A cross-link (2'-cysteinyl-6'-hydroxytryptophan sulfoxide (Trp-Cys)) is located at residues 12 to 16 (WGIGC). A propeptide spanning residues 19–33 (CVGDEVTALLTRGEA) is cleaved from the precursor.

Belongs to the MSDIN fungal toxin family. Processed by the macrocyclase-peptidase enzyme POPB to yield a toxic cyclic decapeptide. POPB first removes 10 residues from the N-terminus. Conformational trapping of the remaining peptide forces the enzyme to release this intermediate rather than proceed to macrocyclization. The enzyme rebinds the remaining peptide in a different conformation and catalyzes macrocyclization of the N-terminal 8 residues.

Its function is as follows. Toxin belonging to the bicyclic octapeptides amatoxins that acts by binding non-competitively to RNA polymerase II and greatly slowing the elongation of transcripts from target promoters. This chain is Beta-amanitin proprotein, found in Amanita fuligineoides.